The following is a 358-amino-acid chain: Phosphoserine aminotransferase (358 aa).

Residue arginine 41 coordinates L-glutamate. Pyridoxal 5'-phosphate is bound by residues 75 to 76 (AR), tryptophan 101, threonine 150, aspartate 170, and glutamine 193. Lysine 194 is modified (N6-(pyridoxal phosphate)lysine). Pyridoxal 5'-phosphate is bound at residue 235-236 (NT).

Belongs to the class-V pyridoxal-phosphate-dependent aminotransferase family. SerC subfamily. In terms of assembly, homodimer. Requires pyridoxal 5'-phosphate as cofactor.

The protein resides in the cytoplasm. It carries out the reaction O-phospho-L-serine + 2-oxoglutarate = 3-phosphooxypyruvate + L-glutamate. It catalyses the reaction 4-(phosphooxy)-L-threonine + 2-oxoglutarate = (R)-3-hydroxy-2-oxo-4-phosphooxybutanoate + L-glutamate. Its pathway is amino-acid biosynthesis; L-serine biosynthesis; L-serine from 3-phospho-D-glycerate: step 2/3. It participates in cofactor biosynthesis; pyridoxine 5'-phosphate biosynthesis; pyridoxine 5'-phosphate from D-erythrose 4-phosphate: step 3/5. Catalyzes the reversible conversion of 3-phosphohydroxypyruvate to phosphoserine and of 3-hydroxy-2-oxo-4-phosphonooxybutanoate to phosphohydroxythreonine. In Histophilus somni (strain 129Pt) (Haemophilus somnus), this protein is Phosphoserine aminotransferase.